A 62-amino-acid polypeptide reads, in one-letter code: Photosystem II reaction center protein Z (62 aa).

The next 2 helical transmembrane spans lie at 8 to 28 (AVFALIATSSILLIGVPVVFA) and 41 to 61 (FSGTSLWIGLVFLVGILNSLI).

This sequence belongs to the PsbZ family. As to quaternary structure, PSII is composed of 1 copy each of membrane proteins PsbA, PsbB, PsbC, PsbD, PsbE, PsbF, PsbH, PsbI, PsbJ, PsbK, PsbL, PsbM, PsbT, PsbY, PsbZ, Psb30/Ycf12, at least 3 peripheral proteins of the oxygen-evolving complex and a large number of cofactors. It forms dimeric complexes.

It localises to the plastid. It is found in the chloroplast thylakoid membrane. Functionally, may control the interaction of photosystem II (PSII) cores with the light-harvesting antenna, regulates electron flow through the 2 photosystem reaction centers. PSII is a light-driven water plastoquinone oxidoreductase, using light energy to abstract electrons from H(2)O, generating a proton gradient subsequently used for ATP formation. The protein is Photosystem II reaction center protein Z of Daucus carota (Wild carrot).